The following is a 349-amino-acid chain: Sphingomyelinase D (349 aa).

The first 18 residues, 1-18 (MLLSSLISLALLSSQVVA), serve as a signal peptide directing secretion. His52 is a catalytic residue. Mg(2+) is bound by residues Glu72, Asp74, and Asp123. An SMD-tail motif is present at residues 310–317 (ATNDNNPW).

Belongs to the sphingomyelinase D/phospholipase D family. Requires Mg(2+) as cofactor.

The protein localises to the secreted. It catalyses the reaction a sphingomyelin + H2O = an N-acylsphing-4-enine 1-phosphate + choline + H(+). In terms of biological role, catalyzes the hydrolysis of sphingomyelin. Sphingomyelinases D are produced by some spider in their venoms, but also by arthropods such as ticks, or pathogenic bacteria and fungi. They might play a role in pathogenicity through different mechanisms, such as membrane destabilization and host cell penetration, but also pulmonary inflammation and cutaneous lesions. The protein is Sphingomyelinase D of Uncinocarpus reesii (strain UAMH 1704).